A 200-amino-acid polypeptide reads, in one-letter code: FMN-dependent NADH:quinone oxidoreductase 2 (200 aa).

135–138 (SRGG) contacts FMN.

It belongs to the azoreductase type 1 family. Homodimer. FMN is required as a cofactor.

The catalysed reaction is 2 a quinone + NADH + H(+) = 2 a 1,4-benzosemiquinone + NAD(+). The enzyme catalyses N,N-dimethyl-1,4-phenylenediamine + anthranilate + 2 NAD(+) = 2-(4-dimethylaminophenyl)diazenylbenzoate + 2 NADH + 2 H(+). In terms of biological role, quinone reductase that provides resistance to thiol-specific stress caused by electrophilic quinones. Its function is as follows. Also exhibits azoreductase activity. Catalyzes the reductive cleavage of the azo bond in aromatic azo compounds to the corresponding amines. In Clostridium acetobutylicum (strain ATCC 824 / DSM 792 / JCM 1419 / IAM 19013 / LMG 5710 / NBRC 13948 / NRRL B-527 / VKM B-1787 / 2291 / W), this protein is FMN-dependent NADH:quinone oxidoreductase 2.